The following is a 170-amino-acid chain: Peptide deformylase (170 aa).

Fe cation-binding residues include C93 and H135. The active site involves E136. Residue H139 coordinates Fe cation.

This sequence belongs to the polypeptide deformylase family. Fe(2+) serves as cofactor.

The catalysed reaction is N-terminal N-formyl-L-methionyl-[peptide] + H2O = N-terminal L-methionyl-[peptide] + formate. In terms of biological role, removes the formyl group from the N-terminal Met of newly synthesized proteins. Requires at least a dipeptide for an efficient rate of reaction. N-terminal L-methionine is a prerequisite for activity but the enzyme has broad specificity at other positions. The protein is Peptide deformylase of Acidobacterium capsulatum (strain ATCC 51196 / DSM 11244 / BCRC 80197 / JCM 7670 / NBRC 15755 / NCIMB 13165 / 161).